An 812-amino-acid polypeptide reads, in one-letter code: MAQHLLHGTLHATIYEVDALHTGGLRSAGFLGKIISNVEETIGFGKGETQLYATIDLQKARVGRTRKITDEPKNPKWYESFHIYCAHMASDIIFTVKDDNPIGATLIGRAYVPVDEVINGEEVEKWVEILDDDRNPIHGESKIHVKLQYFAVEADRNWNMGVKSAKFPGVPYTFFSQRQGCKVSLYQGAHVPDNFVPKIPLAGGKNYEPHRCWEDIFDAITNAKHLIYITGWSVYTEITLVRDSRRPKPGGDMTLGELLKKKATEGVRVLLLVWDDRTSVDVLKKDGLMATHDEDTENYFNGSEVHCVLCPRNPDDGGSIVQNLQVSAMFTHHQKIVVVDSEVPSQGGGSEMRRIMSFVGGIDLCDGRYDTPFHSLFRTLDTVHHDDFHQPNFTGASITKGGPREPWQDIHSRLEGPIAWDVLYNFEQRWSKQGGKDILVKLRELSDIIITPSPVMFQEDHDVWNVQLFRSIDGGAAAGFPDSPEVAAEAGLVSGKDNVIDRSIQDAYIHAIRRAKDFIYIENQYFLGSSFAWAADGITPEDINALHLIPKELSLKIVDKIEKGEKFRVYVVVPMWPEGIPESASVQAILDWQRRTLEMMYKDVTQALRAQGLEEDPRNYLTFFCLGNREVKKEGEYEPAERPDPDTDYMRAQEARRFMIYVHSKMMIVDDEYIIVGSANINQRSMDGARDSEIAMGGYQPHHLSHRQPARGQVHGFRMSLWYEHLGMLDETFLDPSSLECIEKVNRIADKYWDFYSSESLEHDLPGHLLRYPISVDNEGNITELPGFEFFPDSKARILGNKVDYLPPILTT.

Positions 1 to 36 (MAQHLLHGTLHATIYEVDALHTGGLRSAGFLGKIIS) are excised as a propeptide. Positions 1–127 (MAQHLLHGTL…INGEEVEKWV (127 aa)) constitute a C2 domain. A PLD phosphodiesterase 1 domain is found at 328–368 (AMFTHHQKIVVVDSEVPSQGGGSEMRRIMSFVGGIDLCDGR). Catalysis depends on residues His-333, Lys-335, and Asp-340. His-333 is a binding site for a 1,2-diacyl-sn-glycero-3-phosphate. His-374 lines the Ca(2+) pocket. 2 residues coordinate a 1,2-diacyl-sn-glycero-3-phosphate: Gln-524 and His-663. The 28-residue stretch at 658–685 (FMIYVHSKMMIVDDEYIIVGSANINQRS) folds into the PLD phosphodiesterase 2 domain. Active-site residues include His-663, Lys-665, and Asp-670. Residue Glu-724 participates in Ca(2+) binding.

It belongs to the phospholipase D family. C2-PLD subfamily. The cofactor is Ca(2+).

The protein localises to the cytoplasm. Its subcellular location is the membrane. It catalyses the reaction a 1,2-diacyl-sn-glycero-3-phosphocholine + H2O = a 1,2-diacyl-sn-glycero-3-phosphate + choline + H(+). Its function is as follows. Hydrolyzes glycerol-phospholipids at the terminal phosphodiesteric bond. Plays an important role in various cellular processes, including phytohormone action, vesicular trafficking, secretion, cytoskeletal arrangement, meiosis, tumor promotion, pathogenesis, membrane deterioration and senescence. The sequence is that of Phospholipase D alpha 2 (PLD2) from Brassica oleracea var. capitata (Cabbage).